We begin with the raw amino-acid sequence, 359 residues long: DNA replication and repair protein RecF (359 aa).

Position 30 to 37 (30 to 37 (GPNAKGKT)) interacts with ATP.

It belongs to the RecF family.

The protein resides in the cytoplasm. Functionally, the RecF protein is involved in DNA metabolism; it is required for DNA replication and normal SOS inducibility. RecF binds preferentially to single-stranded, linear DNA. It also seems to bind ATP. This is DNA replication and repair protein RecF from Protochlamydia amoebophila (strain UWE25).